The chain runs to 146 residues: uncharacterized protein (146 aa).

The protein belongs to the BlaI transcriptional regulatory family.

This is an uncharacterized protein from Latilactobacillus sakei (Lactobacillus sakei).